Consider the following 626-residue polypeptide: ATP-dependent zinc metalloprotease FtsH (626 aa).

Topologically, residues 1–5 (MNFRN) are cytoplasmic. The helical transmembrane segment at 6-26 (LAIWLVIVAVLGGVFVVSQNS) threads the bilayer. At 27-98 (RTKSSSEISY…DVKFKSGSIS (72 aa)) the chain is on the periplasmic side. A helical transmembrane segment spans residues 99-119 (FLAILVQLLPILLVVGVWLFL). Topologically, residues 120 to 626 (MRQMQGGAKG…SPGAGASVTA (507 aa)) are cytoplasmic. 191 to 198 (GPPGTGKT) lines the ATP pocket. A Zn(2+)-binding site is contributed by H413. E414 is an active-site residue. 2 residues coordinate Zn(2+): H417 and D491.

It in the central section; belongs to the AAA ATPase family. The protein in the C-terminal section; belongs to the peptidase M41 family. In terms of assembly, homohexamer. It depends on Zn(2+) as a cofactor.

Its subcellular location is the cell inner membrane. Its function is as follows. Acts as a processive, ATP-dependent zinc metallopeptidase for both cytoplasmic and membrane proteins. Plays a role in the quality control of integral membrane proteins. Functionally, absence of FtsH leads to increased sigma-32 levels, which suggests, in analogy to E.coli, that sigma-32 is a substrate for FtsH. May play a role in the general stress response, as overexpression leads to improved resistance to salt stress. This Caulobacter vibrioides (strain NA1000 / CB15N) (Caulobacter crescentus) protein is ATP-dependent zinc metalloprotease FtsH.